Reading from the N-terminus, the 1218-residue chain is Coatomer subunit alpha-2 (1218 aa).

WD repeat units follow at residues Thr7 to Asp48, Glu49 to Thr88, Gly91 to Thr132, Gly133 to Ala172, Gly202 to Val241, Gly246 to Thr285, Arg288 to Ala326, and Ser363 to Ser404. Residues Asn826 to Asp849 form a disordered region. Over residues Asp831–Glu843 the composition is skewed to acidic residues.

In terms of assembly, oligomeric complex that consists of at least the alpha, beta, beta', gamma, delta, epsilon and zeta subunits.

It is found in the cytoplasm. The protein localises to the golgi apparatus membrane. It localises to the cytoplasmic vesicle. Its subcellular location is the COPI-coated vesicle membrane. Functionally, the coatomer is a cytosolic protein complex that binds to dilysine motifs and reversibly associates with Golgi non-clathrin-coated vesicles, which further mediate biosynthetic protein transport from the ER, via the Golgi up to the trans Golgi network. Coatomer complex is required for budding from Golgi membranes, and is essential for the retrograde Golgi-to-ER transport of dilysine-tagged proteins. This is Coatomer subunit alpha-2 from Arabidopsis thaliana (Mouse-ear cress).